We begin with the raw amino-acid sequence, 127 residues long: Fluoride-specific ion channel FluC (127 aa).

Helical transmembrane passes span 2–22 (LSSL…RWAI), 35–55 (LGTL…IAIF), 68–88 (LITT…LEVV), and 104–124 (LLNL…VVWI). Glycine 75 and threonine 78 together coordinate Na(+).

This sequence belongs to the fluoride channel Fluc/FEX (TC 1.A.43) family.

The protein localises to the cell inner membrane. The enzyme catalyses fluoride(in) = fluoride(out). Its activity is regulated as follows. Na(+) is not transported, but it plays an essential structural role and its presence is essential for fluoride channel function. Fluoride-specific ion channel. Important for reducing fluoride concentration in the cell, thus reducing its toxicity. The polypeptide is Fluoride-specific ion channel FluC (Serratia proteamaculans (strain 568)).